We begin with the raw amino-acid sequence, 658 residues long: Glycogen debranching enzyme (658 aa).

D336 functions as the Nucleophile in the catalytic mechanism. E371 serves as the catalytic Proton donor. The interval 459–483 (EANGEENRDGTNSNYSDNHGKEGLG) is disordered.

This sequence belongs to the glycosyl hydrolase 13 family.

It carries out the reaction Hydrolysis of (1-&gt;6)-alpha-D-glucosidic linkages to branches with degrees of polymerization of three or four glucose residues in limit dextrin.. Its pathway is glycan degradation; glycogen degradation. Its function is as follows. Removes maltotriose and maltotetraose chains that are attached by 1,6-alpha-linkage to the limit dextrin main chain, generating a debranched limit dextrin. The protein is Glycogen debranching enzyme of Salmonella agona (strain SL483).